The primary structure comprises 499 residues: Probable cytosol aminopeptidase (499 aa).

2 residues coordinate Mn(2+): lysine 263 and aspartate 268. Lysine 275 is an active-site residue. 3 residues coordinate Mn(2+): aspartate 286, aspartate 345, and glutamate 347. Arginine 349 is a catalytic residue.

The protein belongs to the peptidase M17 family. Requires Mn(2+) as cofactor.

The protein localises to the cytoplasm. The enzyme catalyses Release of an N-terminal amino acid, Xaa-|-Yaa-, in which Xaa is preferably Leu, but may be other amino acids including Pro although not Arg or Lys, and Yaa may be Pro. Amino acid amides and methyl esters are also readily hydrolyzed, but rates on arylamides are exceedingly low.. The catalysed reaction is Release of an N-terminal amino acid, preferentially leucine, but not glutamic or aspartic acids.. Presumably involved in the processing and regular turnover of intracellular proteins. Catalyzes the removal of unsubstituted N-terminal amino acids from various peptides. This is Probable cytosol aminopeptidase from Chlamydia caviae (strain ATCC VR-813 / DSM 19441 / 03DC25 / GPIC) (Chlamydophila caviae).